The sequence spans 651 residues: MTDLEKMREKLQNQINYHNILYYQKSKPEISDAEYDELKKKLAAIEPEAYATQDSVGAPPDERFSKVEHQEPMLSLENAYDEQGVEKFLSKIKRFLIADEIEILCEPKIDGLSFSAIYEDGKFVKAATRGDGFVGEDVTHNVATIKGFPKFLQDVQGRLEVRGEIYISNSDFLKLNENNEFANPRNAAAGSLKQLNANITAKRPLRYFAYSLIGGIEKSQSEVLEKLEKLGFCVNEHRSLTSSLNGMLKFYNEIYDCRYNLDYDIDGIVYKVNDLVLQSRLGSTHKAPRSALAYKFSAIYAKTKLNKIFIQVGRTGVLTPVADLVPVNIGGVLVSRASLHNQDEIKRKDIREGDVVTIKRAGDVIPQIVKVDEGSRHTNMPEFVFPDICPECGSKVQIEGVAVRCPEEFNCKAQIVEKLKHFVSKDAFDIVGLGEKQIKFFYDLELIRQIPDIFILEERLKEFSLKEHHGWGEKSIANLLSAIQSRRVISLDRFIFSLGIRFIGQVVAELLANYYVSYDNWYNSMSSNDVELVGIDGIGEKVAESLKSFFSQERNIKMLNDLTAYLQILPVSSNSSDSFLNNKIIVFTGKLRAMSRGEAKVRAKVLGAKISSSLSTKTDYLIAGEDPGSKYKKAMELGVEILDEEQWNRLC.

Residues aspartate 32–aspartate 36, serine 75–leucine 76, and glutamate 106 each bind NAD(+). Lysine 108 serves as the catalytic N6-AMP-lysine intermediate. The NAD(+) site is built by arginine 129, glutamate 164, lysine 271, and lysine 295. Zn(2+) is bound by residues cysteine 389, cysteine 392, cysteine 405, and cysteine 411. The region spanning serine 575–cysteine 651 is the BRCT domain.

The protein belongs to the NAD-dependent DNA ligase family. LigA subfamily. Mg(2+) serves as cofactor. It depends on Mn(2+) as a cofactor.

The catalysed reaction is NAD(+) + (deoxyribonucleotide)n-3'-hydroxyl + 5'-phospho-(deoxyribonucleotide)m = (deoxyribonucleotide)n+m + AMP + beta-nicotinamide D-nucleotide.. Its function is as follows. DNA ligase that catalyzes the formation of phosphodiester linkages between 5'-phosphoryl and 3'-hydroxyl groups in double-stranded DNA using NAD as a coenzyme and as the energy source for the reaction. It is essential for DNA replication and repair of damaged DNA. The sequence is that of DNA ligase from Wolbachia pipientis subsp. Culex pipiens (strain wPip).